Consider the following 276-residue polypeptide: Methylesterase 17 (276 aa).

The 120-residue stretch at 19-138 (PHFVLIHGMS…TDEDMKDGVP (120 aa)) folds into the AB hydrolase-1 domain. The Acyl-ester intermediate role is filled by serine 95. Residues aspartate 225 and histidine 252 each act as charge relay system in the active site.

The protein belongs to the AB hydrolase superfamily. Methylesterase family. In terms of tissue distribution, expressed in several tissues of seedlings and adult plants, with a higher relative level of expression in the seedling shoot apex and the adult stem.

It catalyses the reaction methyl (indol-3-yl)acetate + H2O = (indol-3-yl)acetate + methanol + H(+). Its pathway is plant hormone biosynthesis. Functionally, methylesterase that efficiently and specifically hydrolyzes methyl indole-3-acetic acid (MeIAA) to IAA (auxin). MeIAA is believed to be an inactive form of auxin that needs to be demethylated to exert a biological effect. The chain is Methylesterase 17 from Arabidopsis thaliana (Mouse-ear cress).